Consider the following 565-residue polypeptide: Periplasmic trehalase (565 aa).

An N-terminal signal peptide occupies residues 1–30 (MKSPAPSRPQKMALIPACIFLCFAALSVQA). Substrate contacts are provided by residues Arg-152, 159 to 160 (WD), Asn-196, 205 to 207 (RSQ), 277 to 279 (RPE), and Gly-310. Active-site proton donor/acceptor residues include Asp-312 and Glu-496. A substrate-binding site is contributed by Glu-511. A disordered region spans residues 539 to 565 (CDNVPATRPLSESTTQPVKQKEAEPTP).

This sequence belongs to the glycosyl hydrolase 37 family. In terms of assembly, monomer.

Its subcellular location is the periplasm. It catalyses the reaction alpha,alpha-trehalose + H2O = alpha-D-glucose + beta-D-glucose. Functionally, provides the cells with the ability to utilize trehalose at high osmolarity by splitting it into glucose molecules that can subsequently be taken up by the phosphotransferase-mediated uptake system. This Escherichia coli O17:K52:H18 (strain UMN026 / ExPEC) protein is Periplasmic trehalase.